The following is a 184-amino-acid chain: Ribosome-recycling factor (184 aa).

This sequence belongs to the RRF family.

The protein localises to the cytoplasm. In terms of biological role, responsible for the release of ribosomes from messenger RNA at the termination of protein biosynthesis. May increase the efficiency of translation by recycling ribosomes from one round of translation to another. This chain is Ribosome-recycling factor, found in Borrelia garinii subsp. bavariensis (strain ATCC BAA-2496 / DSM 23469 / PBi) (Borreliella bavariensis).